The chain runs to 67 residues: MTKHDHGLKEKVEGAIDKVKGEVKEVVGKVTDNKKLQAEGKWDKVKGTAKDTVGNVKEKVHEYKEHK.

It belongs to the UPF0337 (CsbD) family.

The sequence is that of UPF0337 protein BCE_3655 from Bacillus cereus (strain ATCC 10987 / NRS 248).